The following is a 534-amino-acid chain: Cytochrome P450 78A9 (534 aa).

A helical membrane pass occupies residues 26–46 (LALSLLVASLASLALSLFFWS). Residue Cys474 participates in heme binding.

The protein belongs to the cytochrome P450 family. Heme serves as cofactor. In terms of tissue distribution, expressed in the funiculus of developing ovules.

It localises to the membrane. Its function is as follows. Plays a role in seed and fruit development. Functions probably in association with CYP78A6 in the regulation of seed growth. The polypeptide is Cytochrome P450 78A9 (CYP78A9) (Arabidopsis thaliana (Mouse-ear cress)).